The chain runs to 174 residues: Thiol-disulfide oxidoreductase ResA (174 aa).

A helical; Signal-anchor for type II membrane protein transmembrane segment spans residues 11–30 (TVILLLLLAALGYTIYANFF). Positions 36 to 174 (VAVGSTAPDF…IKQHLESIKP (139 aa)) constitute a Thioredoxin domain. The cysteines at positions 74 and 77 are disulfide-linked.

Belongs to the thioredoxin family. ResA subfamily.

Its subcellular location is the cell membrane. Its pathway is protein modification; cytochrome c assembly. Its function is as follows. Thiol-disulfide oxidoreductase which is required in disulfide reduction during c-type cytochrome synthesis. May accept reducing equivalents from CcdA, leading to breakage of disulfide bonds in apocytochrome c; following this reduction heme can be covalently attached. In Geobacillus thermodenitrificans (strain NG80-2), this protein is Thiol-disulfide oxidoreductase ResA.